The following is a 356-amino-acid chain: S-adenosylmethionine:tRNA ribosyltransferase-isomerase (356 aa).

This sequence belongs to the QueA family. In terms of assembly, monomer.

The protein resides in the cytoplasm. The catalysed reaction is 7-aminomethyl-7-carbaguanosine(34) in tRNA + S-adenosyl-L-methionine = epoxyqueuosine(34) in tRNA + adenine + L-methionine + 2 H(+). Its pathway is tRNA modification; tRNA-queuosine biosynthesis. Transfers and isomerizes the ribose moiety from AdoMet to the 7-aminomethyl group of 7-deazaguanine (preQ1-tRNA) to give epoxyqueuosine (oQ-tRNA). This chain is S-adenosylmethionine:tRNA ribosyltransferase-isomerase, found in Escherichia fergusonii (strain ATCC 35469 / DSM 13698 / CCUG 18766 / IAM 14443 / JCM 21226 / LMG 7866 / NBRC 102419 / NCTC 12128 / CDC 0568-73).